The following is a 356-amino-acid chain: HTH-type transcriptional regulator AglR (356 aa).

The HTH lacI-type domain maps to 1 to 57 (MPVNLKQLAELLGLSQTTVSRALNGYPEVNAETRARVLEAVRETGYRPNRAAQRLAT). The H-T-H motif DNA-binding region spans 5-24 (LKQLAELLGLSQTTVSRALN). The segment at 337 to 356 (TGPAPDRSPLPNPSPQVGGA) is disordered.

In terms of biological role, probable regulatory protein for the binding-protein-dependent transport system for alpha-glucosides such as sucrose, maltose and trehalose. The protein is HTH-type transcriptional regulator AglR (aglR) of Rhizobium meliloti (strain 1021) (Ensifer meliloti).